A 180-amino-acid polypeptide reads, in one-letter code: Crossover junction endodeoxyribonuclease RuvC (180 aa).

Catalysis depends on residues D7, E66, and D138. Mg(2+)-binding residues include D7, E66, and D138.

Belongs to the RuvC family. In terms of assembly, homodimer which binds Holliday junction (HJ) DNA. The HJ becomes 2-fold symmetrical on binding to RuvC with unstacked arms; it has a different conformation from HJ DNA in complex with RuvA. In the full resolvosome a probable DNA-RuvA(4)-RuvB(12)-RuvC(2) complex forms which resolves the HJ. Mg(2+) serves as cofactor.

Its subcellular location is the cytoplasm. It carries out the reaction Endonucleolytic cleavage at a junction such as a reciprocal single-stranded crossover between two homologous DNA duplexes (Holliday junction).. The RuvA-RuvB-RuvC complex processes Holliday junction (HJ) DNA during genetic recombination and DNA repair. Endonuclease that resolves HJ intermediates. Cleaves cruciform DNA by making single-stranded nicks across the HJ at symmetrical positions within the homologous arms, yielding a 5'-phosphate and a 3'-hydroxyl group; requires a central core of homology in the junction. The consensus cleavage sequence is 5'-(A/T)TT(C/G)-3'. Cleavage occurs on the 3'-side of the TT dinucleotide at the point of strand exchange. HJ branch migration catalyzed by RuvA-RuvB allows RuvC to scan DNA until it finds its consensus sequence, where it cleaves and resolves the cruciform DNA. In Paraburkholderia phytofirmans (strain DSM 17436 / LMG 22146 / PsJN) (Burkholderia phytofirmans), this protein is Crossover junction endodeoxyribonuclease RuvC.